A 217-amino-acid chain; its full sequence is UPF0502 protein VIBHAR_05349 (217 aa).

This sequence belongs to the UPF0502 family.

The polypeptide is UPF0502 protein VIBHAR_05349 (Vibrio campbellii (strain ATCC BAA-1116)).